The primary structure comprises 500 residues: UPF0371 protein SZO_06760 (500 aa).

This sequence belongs to the UPF0371 family.

This Streptococcus equi subsp. zooepidemicus (strain H70) protein is UPF0371 protein SZO_06760.